Here is a 91-residue protein sequence, read N- to C-terminus: Protein transport protein sft1 (91 aa).

The Cytoplasmic segment spans residues 1–68; sequence MNDQNERRLE…RVVRSAGRRR (68 aa). The helical; Anchor for type IV membrane protein transmembrane segment at 69–86 threads the bilayer; sequence IMTMVLAIVGSILIIYYA. Topologically, residues 87–91 are lumenal; the sequence is SKWFF.

As to quaternary structure, component of a SNARE complex consisting of sed5, gos1, ykt6 and sft1.

It is found in the golgi apparatus membrane. In terms of biological role, vesicle SNARE required for retrograde transport within the Golgi complex. This is Protein transport protein sft1 (sft1) from Schizosaccharomyces pombe (strain 972 / ATCC 24843) (Fission yeast).